Reading from the N-terminus, the 767-residue chain is Tetratricopeptide repeat protein 16 (767 aa).

9 TPR repeats span residues 18–51, 53–85, 93–126, 128–155, 208–241, 242–275, 288–321, 322–355, and 363–396; these read VREYYNQGHQCLLQEDWEMSVLFFSRALHLDPKL, DFYVFRAEAFIQLCDFSSALQNLRRAYSYDPGN, AFVLYLQGQCLYELCDFQEALCVFLQASDLQPQN, SFSYRCMACLLALKRYHDCLALITREVK, AKQSLQDASTLAVQGKVHRALKCINCAIENNPLD, PNFFFFRGTLRRRLQQFDHAVEDFLKAMDMVTDT, LLTYNDFAVHCYNHGAYQEGVLLLNKAIRDEQNE, KGLYINRGDCFFQLGNLAFAEADYKQALALSPLD, and GVLQEKLGFCQQKHRQFQTAEEHFSEAIRHSPQK. Residues 612–733 form a disordered region; sequence EVTPAYGQRD…DSLSFSEISS (122 aa). The span at 684–718 shows a compositional bias: polar residues; that stretch reads QRSSQKVTKTPSLTHSTTHSDIGESANDTPGQTPW.

This Mus musculus (Mouse) protein is Tetratricopeptide repeat protein 16 (Ttc16).